Consider the following 469-residue polypeptide: Glutamine synthetase (469 aa).

The region spanning 13 to 97 is the GS beta-grasp domain; that stretch reads HEVKFVDLRF…IRCDILEPGT (85 aa). Residues 105–469 enclose the GS catalytic domain; that stretch reads PRSIAKRAED…PVEFELYYSV (365 aa). 2 residues coordinate Mg(2+): glutamate 130 and glutamate 132. Position 208 (glutamate 208) interacts with ATP. Mg(2+)-binding residues include glutamate 213 and glutamate 221. L-glutamate contacts are provided by residues 265–266 and glycine 266; that span reads NG. Histidine 270 provides a ligand contact to Mg(2+). ATP-binding positions include 272–274 and serine 274; that span reads HMS. The L-glutamate site is built by arginine 322, glutamate 328, and arginine 340. 3 residues coordinate ATP: arginine 340, arginine 345, and lysine 353. Glutamate 358 is a Mg(2+) binding site. L-glutamate is bound at residue arginine 360. Tyrosine 398 carries the post-translational modification O-AMP-tyrosine.

Belongs to the glutamine synthetase family. Oligomer of 12 subunits arranged in the form of two hexagons. Mn(2+) is required as a cofactor.

Its subcellular location is the cytoplasm. The enzyme catalyses L-glutamate + NH4(+) + ATP = L-glutamine + ADP + phosphate + H(+). Its activity is regulated as follows. When cellular nitrogen levels are high, the C-terminal adenylyl transferase (AT) of GlnE inhibits GlnA by covalent transfer of an adenylyl group from ATP to Tyr-398. Conversely, when nitrogen levels are low, the N-terminal adenylyl removase (AR) of GlnE activates GlnA by removing the adenylyl group by phosphorolysis. The fully adenylated enzyme complex is inactive. In terms of biological role, catalyzes the ATP-dependent biosynthesis of glutamine from glutamate and ammonia. This chain is Glutamine synthetase, found in Salmonella typhi.